A 56-amino-acid chain; its full sequence is Small ribosomal subunit protein uS14 (56 aa).

S9 is modified (phosphoserine). The residue at position 12 (R12) is an Omega-N-methylarginine. Residues C21, C24, C39, and C42 each coordinate Zn(2+). K48 is modified (N6-acetyllysine).

This sequence belongs to the universal ribosomal protein uS14 family. Component of the 40S small ribosomal subunit. Requires Zn(2+) as cofactor.

The protein localises to the cytoplasm. It localises to the cytosol. The protein resides in the rough endoplasmic reticulum. In terms of biological role, component of the small ribosomal subunit. The ribosome is a large ribonucleoprotein complex responsible for the synthesis of proteins in the cell. The chain is Small ribosomal subunit protein uS14 (RPS29) from Sus scrofa (Pig).